We begin with the raw amino-acid sequence, 101 residues long: Urease subunit beta (101 aa).

This sequence belongs to the urease beta subunit family. In terms of assembly, heterotrimer of UreA (gamma), UreB (beta) and UreC (alpha) subunits. Three heterotrimers associate to form the active enzyme.

The protein resides in the cytoplasm. It carries out the reaction urea + 2 H2O + H(+) = hydrogencarbonate + 2 NH4(+). The protein operates within nitrogen metabolism; urea degradation; CO(2) and NH(3) from urea (urease route): step 1/1. The protein is Urease subunit beta of Agrobacterium fabrum (strain C58 / ATCC 33970) (Agrobacterium tumefaciens (strain C58)).